The primary structure comprises 226 residues: Brachyurin (226 aa).

One can recognise a Peptidase S1 domain in the interval 1–223 (IVGGVEAVPN…FLDWIQTQTG (223 aa)). The cysteines at positions 26 and 42 are disulfide-linked. Catalysis depends on charge relay system residues His41 and Asp87. Intrachain disulfides connect Cys151–Cys164 and Cys174–Cys200. Ser178 (charge relay system) is an active-site residue.

This sequence belongs to the peptidase S1 family.

It catalyses the reaction Hydrolysis of proteins, with broad specificity for peptide bonds. Native collagen is cleaved about 75% of the length of the molecule from the N-terminus. Low activity on small molecule substrates of both trypsin and chymotrypsin.. Functionally, this enzyme is a serine protease capable of degrading the native triple helix of collagen. The sequence is that of Brachyurin from Leptuca pugilator (Atlantic sand fiddler crab).